A 300-amino-acid polypeptide reads, in one-letter code: tRNA pseudouridine synthase B (300 aa).

Residue Asp38 is the Nucleophile of the active site.

This sequence belongs to the pseudouridine synthase TruB family. Type 1 subfamily.

It catalyses the reaction uridine(55) in tRNA = pseudouridine(55) in tRNA. Functionally, responsible for synthesis of pseudouridine from uracil-55 in the psi GC loop of transfer RNAs. The protein is tRNA pseudouridine synthase B of Anaplasma phagocytophilum (strain HZ).